Consider the following 431-residue polypeptide: MADQSSRYISNLTRDTYALILAGGKGSRLHELTTWRAKPALYFGGKFRIIDFPLSNCVNSGIRRIGVVTQYKSHSLIRHLVRGWGHFKKELGESVEILPASQRFSDSWYEGTADAVFQNIDIIRDELPKYVMILSGDHIYRMDYGDMLAKHKESGAKMTVSCMSVPLEEAAGAFGVMSVDENYRINGFEEKPANPTPLPNDPTRCLASMGNYVFDTEFLFEQLRVDSENMGSQRDFGKDIIPSIIADHPVYAYPFEQSGGDNAYWRDVGTIDSFWEANMEMVAPVPQLNLYDRKWPIWTYQEQLPPAKFVWEDHDRRGEAINSVVSGGCIISGSTLRSSICFSNVRVHSYGLIEDAVILPDVEIKRHCKLKRVIIDRGCVIPEGTTIGYDLEQDKARGFRVSEKGVVLVTREMLGQPVGGLSQAPNISITL.

Residues Tyr-109, Gly-175, Glu-190–Lys-191, and Ser-208 contribute to the alpha-D-glucose 1-phosphate site.

Belongs to the bacterial/plant glucose-1-phosphate adenylyltransferase family. Homotetramer.

It catalyses the reaction alpha-D-glucose 1-phosphate + ATP + H(+) = ADP-alpha-D-glucose + diphosphate. Its pathway is glycan biosynthesis; glycogen biosynthesis. Functionally, involved in the biosynthesis of ADP-glucose, a building block required for the elongation reactions to produce glycogen. Catalyzes the reaction between ATP and alpha-D-glucose 1-phosphate (G1P) to produce pyrophosphate and ADP-Glc. The chain is Glucose-1-phosphate adenylyltransferase from Alteromonas mediterranea (strain DSM 17117 / CIP 110805 / LMG 28347 / Deep ecotype).